We begin with the raw amino-acid sequence, 169 residues long: Sorting nexin-24 (169 aa).

Position 1 is an N-acetylmethionine (Met-1). The PX domain maps to 1 to 125 (MEVYIPSFRH…SFDETESEES (125 aa)). A 1,2-diacyl-sn-glycero-3-phospho-(1D-myo-inositol-3-phosphate) is bound by residues Arg-38, Ser-40, Lys-61, and Arg-74. A phosphoserine mark is found at Ser-113 and Ser-116.

It belongs to the sorting nexin family.

Its subcellular location is the cytoplasmic vesicle membrane. Its function is as follows. May be involved in several stages of intracellular trafficking. The sequence is that of Sorting nexin-24 (Snx24) from Rattus norvegicus (Rat).